The chain runs to 386 residues: GTPase Obg (386 aa).

In terms of domain architecture, Obg spans 4 to 162 (SNFVDYVKIY…MTVILELKLL (159 aa)). The tract at residues 18 to 45 (KGGRGSTHMRREKYTPNGGPDGGDGGRG) is disordered. A compositionally biased stretch (gly residues) spans 36-45 (GPDGGDGGRG). Residues 163 to 329 (ADVGLVGFPN…LKDILWTELN (167 aa)) form the OBG-type G domain. GTP is bound by residues 169 to 176 (GFPNAGKS), 194 to 198 (FTTLE), 216 to 219 (DIPG), 283 to 286 (TKSD), and 310 to 312 (SSV). Mg(2+) contacts are provided by serine 176 and threonine 196. The tract at residues 351-386 (ELKDMGEDEELDYEYEDDGDEDDLDYEYEEEDWEDK) is disordered. Over residues 356 to 386 (GEDEELDYEYEDDGDEDDLDYEYEEEDWEDK) the composition is skewed to acidic residues.

Belongs to the TRAFAC class OBG-HflX-like GTPase superfamily. OBG GTPase family. In terms of assembly, monomer. Requires Mg(2+) as cofactor.

It localises to the cytoplasm. An essential GTPase which binds GTP, GDP and possibly (p)ppGpp with moderate affinity, with high nucleotide exchange rates and a fairly low GTP hydrolysis rate. Plays a role in control of the cell cycle, stress response, ribosome biogenesis and in those bacteria that undergo differentiation, in morphogenesis control. This chain is GTPase Obg, found in Bacteroides fragilis (strain YCH46).